Here is a 621-residue protein sequence, read N- to C-terminus: Signal recognition particle receptor subunit alpha homolog (621 aa).

The segment at 1 to 158 (MFDQLAVFTP…KKFEQYFRIK (158 aa)) is SRX. Residues 167 to 217 (HINPDNFTKNGSVPQSHNKNTKKKLRDTKGKKQSTGNVGSGRKWGRDGGML) are disordered. The segment covering 171–183 (DNFTKNGSVPQSH) has biased composition (polar residues). The segment covering 185-198 (KNTKKKLRDTKGKK) has biased composition (basic residues). Ser239 carries the phosphoserine modification. An NG domain region spans residues 398–620 (YVFSIVGVNG…SVKWAVNTLM (223 aa)). GTP is bound by residues 404 to 411 (GVNGVGKS) and 510 to 514 (DTAGR). Ser523 is modified (phosphoserine). A GTP-binding site is contributed by 572–575 (SKCD).

It belongs to the GTP-binding SRP family. In terms of assembly, heterodimer of an alpha and a beta chain.

The protein resides in the endoplasmic reticulum membrane. Functionally, component of the SRP (signal recognition particle) receptor (SR). Ensures, in conjunction with the signal recognition particle, the correct targeting of the nascent secretory proteins to the endoplasmic reticulum membrane system. GTP hydrolysis may enhance the fidelity of and provide unidirectionality to the targeting reaction. It is important but not essential for cell growth. May be directly involved in mitochondrial protein import. The polypeptide is Signal recognition particle receptor subunit alpha homolog (SRP101) (Saccharomyces cerevisiae (strain ATCC 204508 / S288c) (Baker's yeast)).